A 192-amino-acid polypeptide reads, in one-letter code: Xanthine phosphoribosyltransferase (192 aa).

Residues L20 and N27 each coordinate xanthine. A 5-phospho-alpha-D-ribose 1-diphosphate-binding site is contributed by 128 to 132 (AHGEA). K156 lines the xanthine pocket.

This sequence belongs to the purine/pyrimidine phosphoribosyltransferase family. Xpt subfamily. As to quaternary structure, homodimer.

It is found in the cytoplasm. It carries out the reaction XMP + diphosphate = xanthine + 5-phospho-alpha-D-ribose 1-diphosphate. Its pathway is purine metabolism; XMP biosynthesis via salvage pathway; XMP from xanthine: step 1/1. Its function is as follows. Converts the preformed base xanthine, a product of nucleic acid breakdown, to xanthosine 5'-monophosphate (XMP), so it can be reused for RNA or DNA synthesis. The sequence is that of Xanthine phosphoribosyltransferase from Lactobacillus gasseri (strain ATCC 33323 / DSM 20243 / BCRC 14619 / CIP 102991 / JCM 1131 / KCTC 3163 / NCIMB 11718 / NCTC 13722 / AM63).